A 70-amino-acid polypeptide reads, in one-letter code: Small ribosomal subunit protein bS21 (70 aa).

It belongs to the bacterial ribosomal protein bS21 family.

This is Small ribosomal subunit protein bS21 from Campylobacter curvus (strain 525.92).